The following is a 63-amino-acid chain: Mu-like prophage FluMu protein gp38 (63 aa).

It to phage Mu protein gp38.

The chain is Mu-like prophage FluMu protein gp38 from Haemophilus influenzae (strain ATCC 51907 / DSM 11121 / KW20 / Rd).